We begin with the raw amino-acid sequence, 270 residues long: Karrikin insensitive 2 receptor CA (270 aa).

S95 acts as the Nucleophile in catalysis. Residues D217 and H246 contribute to the active site.

It belongs to the AB hydrolase superfamily. In terms of tissue distribution, expressed in stigma.

The protein localises to the nucleus. Its subcellular location is the cytoplasm. Functionally, hydrolase which may be involved in plant olfaction during volatile communication. This Petunia hybrida (Petunia) protein is Karrikin insensitive 2 receptor CA.